A 506-amino-acid chain; its full sequence is MTPVVALVGRPNVGKSTLFNRLTRTRDALVADFPGLTRDRKYGHANIAGYDFIVIDTGGIDGTEEGVEEKMAEQSLLAIEEADVVLFLVDARAGLVPADIGIAQYLRQREKTTVVVANKTDGIDADSHCAEFYQLGLGEVEQIAAAQGRGVTQLIDQVLAPLGEQLNADQAVENEENSANEEADEWDTDFDFENEDDTALLDEALEEETEESIEDKNIKIAIVGRPNVGKSTLTNRILGEERVVVYDMPGTTRDSIYIPMERDGQQYTIIDTAGVRKRGKVNLAVEKFSVIKTLQAIQDANVVLLTIDAREGISDQDLSLLGFILNAGRSLVIVVNKWDGLSQDIKDQVKSELDRRLDFIDFARVHFISALHGSGVGNLFDSVKEAYACATQKTSTSMLTRILRMAADEHQPPLVNGRRVKLKYAHPGGYNPPIIVIHGNQVEKLADSYKRYLSNYFRKSLKIIGSPIRIQFQEGNNPFAGKKNKLTPNQLRKRKRLMKFIKKSKK.

EngA-type G domains follow at residues 3–166 (PVVA…GEQL) and 218–391 (IKIA…ACAT). GTP-binding positions include 9–16 (GRPNVGKS), 56–60 (DTGGI), 118–121 (NKTD), 224–231 (GRPNVGKS), 271–275 (DTAGV), and 336–339 (NKWD). One can recognise a KH-like domain in the interval 392–476 (QKTSTSMLTR…PIRIQFQEGN (85 aa)).

This sequence belongs to the TRAFAC class TrmE-Era-EngA-EngB-Septin-like GTPase superfamily. EngA (Der) GTPase family. In terms of assembly, associates with the 50S ribosomal subunit.

Its function is as follows. GTPase that plays an essential role in the late steps of ribosome biogenesis. The polypeptide is GTPase Der (Actinobacillus pleuropneumoniae serotype 5b (strain L20)).